The sequence spans 530 residues: uncharacterized protein (530 aa).

5 helical membrane passes run 4–23 (FLAA…GLAI), 28–47 (LFGV…VVST), 57–79 (FVFQ…PAFF), 91–113 (LFMI…AFGL), and 148–170 (VIGY…AVGA). The RCK C-terminal domain occupies 260–344 (LGGECDTKIE…MGEVRRFLGD (85 aa)). Transmembrane regions (helical) follow at residues 352 to 374 (VNLL…PVPL), 379 to 398 (TMYL…LGAL), 419 to 441 (LGLA…QALT), and 451 to 473 (VGFA…LLKL).

This sequence belongs to the AAE transporter (TC 2.A.81) family.

It is found in the cell membrane. This is an uncharacterized protein from Corynebacterium efficiens (strain DSM 44549 / YS-314 / AJ 12310 / JCM 11189 / NBRC 100395).